The primary structure comprises 496 residues: Cytochrome P450 71B12 (496 aa).

Residues 2 to 22 (SLWYIIVAFVFFSSMIIVRII) form a helical membrane-spanning segment. A heme-binding site is contributed by C436.

Belongs to the cytochrome P450 family. It depends on heme as a cofactor.

It is found in the membrane. The protein is Cytochrome P450 71B12 (CYP71B12) of Arabidopsis thaliana (Mouse-ear cress).